The chain runs to 1500 residues: Copper-transporting ATPase 1 (1500 aa).

At 1-653 the chain is on the cytoplasmic side; sequence MDPSMGVNSV…KREIRQWRRS (653 aa). 2 consecutive HMA domains span residues 8 to 74 and 85 to 151; these read NSVT…FDAV and TDTL…LDTG. Cu(+) is bound by residues T18, C19, and C22. Phosphothreonine is present on T152. The HMA 3 domain occupies 171-237; the sequence is VVLKMKVEGM…QIEAMGFPAF (67 aa). Cu(+)-binding residues include C182 and C185. S270 is modified (phosphoserine). The HMA 4 domain maps to 277-343; that stretch reads STATFIIDGM…AIEAVSPGLY (67 aa). Cu(+)-binding residues include C288 and C291. A Phosphothreonine modification is found at T327. 4 positions are modified to phosphoserine: S339, S353, S357, and S362. HMA domains follow at residues 377–443, 488–554, and 564–630; these read QETV…FDAT, SKCY…FGAT, and GVLE…FEAS. C388, C391, C499, C502, C575, and C578 together coordinate Cu(+). The helical transmembrane segment at 654–675 threads the bilayer; that stretch reads FLVSLFFCIPVMGLMIYMMVMD. The Extracellular portion of the chain corresponds to 676–714; it reads HHFATLHHNQNMSKEEMINLHSSMFLERQILPGLSVMNL. A glycan (N-linked (GlcNAc...) asparagine) is linked at N686. A helical transmembrane segment spans residues 715–734; it reads LSFLLCVPVQFFGGWYFYIQ. Topologically, residues 735-741 are cytoplasmic; it reads AYKALKH. The chain crosses the membrane as a helical span at residues 742-762; it reads KTANMDVLIVLATTIAFAYSL. Over 763–781 the chain is Extracellular; it reads IILLVAMYERAKVNPITFF. Residues 782 to 802 form a helical membrane-spanning segment; the sequence is DTPPMLFVFIALGRWLEHIAK. Topologically, residues 803–936 are cytoplasmic; the sequence is GKTSEALAKL…KAPIQQFADK (134 aa). A helical transmembrane segment spans residues 937-959; that stretch reads LSGYFVPFIVFVSIATLLVWIVI. Residues 960–989 are Extracellular-facing; sequence GFLNFEIVETYFPGYNRSISRTETIIRFAF. Residue N975 is glycosylated (N-linked (GlcNAc...) asparagine). Residues 990 to 1011 form a helical membrane-spanning segment; the sequence is QASITVLCIACPCSLGLATPTA. Topologically, residues 1012-1356 are cytoplasmic; that stretch reads VMVGTGVGAQ…LSRKTVKRIR (345 aa). The 4-aspartylphosphate intermediate role is filled by D1044. An ATP-binding site is contributed by E1081. A Phosphothreonine modification is found at T1212. D1301 and D1305 together coordinate Mg(2+). A helical membrane pass occupies residues 1357–1374; the sequence is INFVFALIYNLVGIPIAA. Over 1375–1385 the chain is Extracellular; it reads GVFMPIGLVLQ. Residues 1386–1405 form a helical membrane-spanning segment; sequence PWMGSAAMAASSVSVVLSSL. Over 1406 to 1500 the chain is Cytoplasmic; sequence FLKLYRKPTY…DFREDDDTAL (95 aa). 5 positions are modified to phosphoserine: S1430, S1432, S1460, S1463, and S1466. The Endocytosis signal motif lies at 1467-1468; sequence LL. A phosphoserine mark is found at S1469, S1473, S1476, and S1486. Positions 1486 to 1500 are PDZD11-binding; that stretch reads SLLVGDFREDDDTAL. Positions 1487–1488 match the Endocytosis signal motif; it reads LL.

Belongs to the cation transport ATPase (P-type) (TC 3.A.3) family. Type IB subfamily. In terms of assembly, monomer. Interacts with PDZD11. Interacts with ATOX1 and COMMD1. Interacts with TYRP1. Directly interacts with SOD3; this interaction is copper-dependent and is required for SOD3 activity. Widely expressed including in heart, brain, lung, muscle, kidney, pancreas, and to a lesser extent placenta. Expressed in fibroblasts, aortic smooth muscle cells, aortic endothelial cells and umbilical vein endothelial cells (at protein level). As to expression, expressed in cerebellum and brain cortex.

The protein resides in the golgi apparatus. It is found in the trans-Golgi network membrane. It localises to the cell membrane. The protein localises to the melanosome membrane. Its subcellular location is the early endosome membrane. The protein resides in the cell projection. It is found in the axon. It localises to the dendrite. The protein localises to the postsynaptic density. Its subcellular location is the cytoplasm. The protein resides in the cytosol. It is found in the endoplasmic reticulum. The enzyme catalyses Cu(+)(in) + ATP + H2O = Cu(+)(out) + ADP + phosphate + H(+). Functionally, ATP-driven copper (Cu(+)) ion pump that plays an important role in intracellular copper ion homeostasis. Within a catalytic cycle, acquires Cu(+) ion from donor protein on the cytoplasmic side of the membrane and delivers it to acceptor protein on the lumenal side. The transfer of Cu(+) ion across the membrane is coupled to ATP hydrolysis and is associated with a transient phosphorylation that shifts the pump conformation from inward-facing to outward-facing state. Under physiological conditions, at low cytosolic copper concentration, it is localized at the trans-Golgi network (TGN) where it transfers Cu(+) ions to cuproenzymes of the secretory pathway. Upon elevated cytosolic copper concentrations, it relocalizes to the plasma membrane where it is responsible for the export of excess Cu(+) ions. May play a dual role in neuron function and survival by regulating cooper efflux and neuronal transmission at the synapse as well as by supplying Cu(+) ions to enzymes such as PAM, TYR and SOD3. In the melanosomes of pigmented cells, provides copper cofactor to TYR to form an active TYR holoenzyme for melanin biosynthesis. The polypeptide is Copper-transporting ATPase 1 (Homo sapiens (Human)).